A 171-amino-acid chain; its full sequence is Putative rhomboid protein L523 (171 aa).

4 helical membrane passes run 3–23 (YVTYIVLLILVVIFFSPLNFF), 67–87 (FAFCIIFIWILSSMLLLAEHT), 94–114 (VYTVGFSGVIFGLIVVYLMSL), and 119–139 (GLSIAGLVLSIIPQFFVSGIS). The Nucleophile role is filled by S100. Residue H143 is part of the active site. The chain crosses the membrane as a helical span at residues 144–164 (ICGMIAGFVYVVLFPLPKGSV).

It belongs to the peptidase S54 family.

The protein resides in the membrane. In terms of biological role, probable serine protease. The chain is Putative rhomboid protein L523 from Acanthamoeba polyphaga mimivirus (APMV).